Consider the following 418-residue polypeptide: Putative O-antigen transporter (418 aa).

A run of 11 helical transmembrane segments spans residues 8–28 (VWNL…LGFL), 37–57 (FGVY…DVGL), 85–105 (FLVL…DGIV), 124–144 (LLAI…ILEG), 165–185 (IPAI…GLIF), 217–237 (LFFF…MVYF), 251–271 (VAFY…PAAI), 297–317 (LLMF…SGLV), 334–354 (LNVL…FSAI), 362–382 (ITAL…YFMV), and 385–405 (YGLL…ALLL).

The protein belongs to the polysaccharide synthase family.

It localises to the cell inner membrane. It functions in the pathway bacterial outer membrane biogenesis; lipopolysaccharide biosynthesis. Its function is as follows. Could be an O-antigen transporter. The protein is Putative O-antigen transporter (rfbE) of Shigella flexneri.